A 207-amino-acid polypeptide reads, in one-letter code: Guanylate kinase (207 aa).

In terms of domain architecture, Guanylate kinase-like spans 6–185 (GLLIVLSGPS…AKERIQSIVE (180 aa)). An ATP-binding site is contributed by 13-20 (GPSGVGKG).

It belongs to the guanylate kinase family.

The protein localises to the cytoplasm. The catalysed reaction is GMP + ATP = GDP + ADP. In terms of biological role, essential for recycling GMP and indirectly, cGMP. The protein is Guanylate kinase of Staphylococcus haemolyticus (strain JCSC1435).